Consider the following 165-residue polypeptide: Nascent polypeptide-associated complex subunit beta (165 aa).

Residues 33 to 97 enclose the NAC-A/B domain; that stretch reads TTDDKRLQST…PQTKKLQDIL (65 aa). The interval 120–165 is disordered; it reads QKQAPGAGDVPATIQEEDDDDDVPDLVVGETFETPATEEAPKAAAS. Positions 134 to 143 are enriched in acidic residues; it reads QEEDDDDDVP. Over residues 144-165 the composition is skewed to low complexity; sequence DLVVGETFETPATEEAPKAAAS.

The protein belongs to the NAC-beta family. In terms of assembly, part of the nascent polypeptide-associated complex (NAC).

The chain is Nascent polypeptide-associated complex subunit beta from Arabidopsis thaliana (Mouse-ear cress).